The chain runs to 82 residues: uncharacterized protein (82 aa).

3 helical membrane-spanning segments follow: residues 1–21 (MSAS…SVST), 22–42 (VLLG…LAAF), and 62–82 (WRLL…LTLL).

Its subcellular location is the cell membrane. This is an uncharacterized protein from Stutzerimonas stutzeri (Pseudomonas stutzeri).